We begin with the raw amino-acid sequence, 391 residues long: Cdc42 effector protein 1 (391 aa).

A phosphoserine mark is found at Ser19 and Ser27. Thr34 is modified (phosphothreonine). A CRIB domain is found at 38 to 52; the sequence is ISHPLGDFRHTMHVG. Ser39 carries the phosphoserine modification. Arg53 bears the Omega-N-methylarginine mark. Residues Ser65, Ser73, Ser77, Ser101, Ser113, Ser121, and Ser139 each carry the phosphoserine modification. The interval 163–189 is disordered; that stretch reads ISRLPRSEKPHDRDRDGSFPSEPGLRR. The segment covering 167 to 179 has biased composition (basic and acidic residues); sequence PRSEKPHDRDRDG. Residues Ser180, Ser190, Ser192, and Ser195 each carry the phosphoserine modification. 8 tandem repeats follow at residues 220-226, 227-233, 234-240, 241-247, 248-254, 255-261, 262-268, and 269-275. The tract at residues 220–275 is 8 X 7 AA tandem repeats of [PT]-[AT]-A-[ENT]-[PT]-[PTS]-[AG]; that stretch reads PAAETPAPAANPPAPTANPTGPAANPPATTANPPAPAANPSAPAATPTGPAANPPA. Residues 221–338 are disordered; that stretch reads AAETPAPAAN…HHYPEMDARQ (118 aa). Low complexity predominate over residues 236–270; that stretch reads ANPTGPAANPPATTANPPAPAANPSAPAATPTGPA. A Phosphoserine modification is found at Ser303. The span at 327–338 shows a compositional bias: basic and acidic residues; that stretch reads GGHHYPEMDARQ. Phosphoserine occurs at positions 350 and 353. Residues 354–391 are disordered; that stretch reads LDEEWRAPQAGSRTPVPSTVQANTFEFADAEEDDEVKV. A compositionally biased stretch (polar residues) spans 364-377; the sequence is GSRTPVPSTVQANT. Over residues 381-391 the composition is skewed to acidic residues; sequence ADAEEDDEVKV.

Belongs to the BORG/CEP family. Interacts with RHOQ and CDC42, in a GTP-dependent manner. As to expression, endothelial and bone marrow stromal cells.

Its subcellular location is the endomembrane system. It is found in the cytoplasm. It localises to the cytoskeleton. Probably involved in the organization of the actin cytoskeleton. Induced membrane extensions in fibroblasts. The protein is Cdc42 effector protein 1 (CDC42EP1) of Homo sapiens (Human).